Reading from the N-terminus, the 653-residue chain is MRYIGSKKLLLPEIKKMVDKHTDGSEEVFLDLFAGTNVVANYFKQFYTVYSNDMLFFSYVNAKATIENNSKPSFSKLIQAGISSPMTYLQNLEVNDETIGYYEVAYSPTGEANYLSVHNAKKLDIIRSQIESWKNQNLLTEHEYYYLLSSLIEALPFISNTTGTYGAFLKHWDKRSLNDLELQDFTIFDNSKQNKAFNEDANELVQKIKADIVYIDTPYNSRQYASNYHLLENVARNEHPTLKGITKIFDWKNLKSDYATKGKALVAMRDLIQNINSTHIILSYNNEGIISEEDLTNILKEFSVDGIVDIKKIPYRKYQSKNVSKNKEIYELLFYIQRKPFSKNKTLNKPLNNVRVSSTKKYIKSPLNYIGGKYKLLNQILPLFPKNINTFVDIFSGGANVGINVKAKKYIFNDMNTRINEMFRYFQTQPPVKLVQQIEEKIDEWGLSKTNEDAFLAFRKHYNTNPNPLDLYVLSSFSYNYQFRFNNSMEFNNPFGRNRSHFSENMRNNLLNFVTKLQTLDATFTDNYFNEFDFSNLTSNDFIYLDPPYLITTGSYNDGKRGFSDWNNTSEMKLLNFMDYLNQHGIRFALSNVTEHKGKTNQLLKDWAYSRNLNVNYLDHNYNNSSHNSKSKGSQEVLITNYETKTFNLLNTK.

The protein belongs to the N(4)/N(6)-methyltransferase family. As to quaternary structure, monomer.

It catalyses the reaction a 2'-deoxyadenosine in DNA + S-adenosyl-L-methionine = an N(6)-methyl-2'-deoxyadenosine in DNA + S-adenosyl-L-homocysteine + H(+). In terms of biological role, an alpha subtype methylase that recognizes the double-stranded sequence 5'-GGATG-3' in one strand and 3'-CATCC-5' in the other, methylates A of both strands, and protects the DNA from cleavage by the StsI endonuclease. The 2 domains of the protein participate in modification of the two strands. This chain is Modification methylase StsI (stsIM), found in Streptococcus sanguinis.